Here is a 1137-residue protein sequence, read N- to C-terminus: Morphogenesis-related protein MSB1 (1137 aa).

2 disordered regions span residues M1 to D59 and Q483 to T520. Positions S21–R50 are enriched in polar residues. Phosphoserine is present on S538. 3 disordered regions span residues L577–V620, S736–K799, and A814–S871. The span at F593 to T608 shows a compositional bias: basic and acidic residues. Polar residues predominate over residues S736–Y749. The span at T750–D769 shows a compositional bias: basic and acidic residues. A compositionally biased stretch (polar residues) spans D770–S796. 2 positions are modified to phosphoserine: S776 and S816.

Its function is as follows. May play a role in polarity establishment and bud formation. The MSB1 gene may be functionally redundant. The polypeptide is Morphogenesis-related protein MSB1 (MSB1) (Saccharomyces cerevisiae (strain ATCC 204508 / S288c) (Baker's yeast)).